Consider the following 735-residue polypeptide: Transcription factor RFX4 (735 aa).

Positions 27-59 are disordered; the sequence is NKRYSSHTSLGNVSNDENEEKENNRASKPHSTP. Residues 32–41 show a composition bias toward polar residues; that stretch reads SHTSLGNVSN. Residues 44–126 mediate DNA binding; that stretch reads NEEKENNRAS…RRLGTRGQSK (83 aa). The segment at residues 61–136 is a DNA-binding region (RFX-type winged-helix); sequence TLQWLEENYE…YHYYGIAVKE (76 aa). Residues 315–487 form a necessary for dimerization region; sequence RFSQILRRQT…NELMRAMKGE (173 aa). A disordered region spans residues 501 to 538; it reads EATPPTPSPGPSFSPAKSATSVEVPPPSSPVSNPSPEY.

This sequence belongs to the RFX family. In terms of assembly, homodimer. Heterodimer with RFX2 and RFX3. Binds DNA. Interacts with GPS2. As to expression, isoform 1: Brain-specific. Isoform 2: Testis-specific. Isoform 1: Highly expressed in the suprachiasmatic nucleus, the central pacemaker site of the circadian clock (at protein level).

It localises to the nucleus. Its function is as follows. Transcription factor that plays a role in early brain development. May activate transcription by interacting directly with the X-box. May activate transcription from CX3CL1 promoter through the X-box during brain development. May be required for neural tube ciliogenesis during embryogenesis. The sequence is that of Transcription factor RFX4 (Rfx4) from Mus musculus (Mouse).